Consider the following 193-residue polypeptide: MSTMLIAVILLTLLALFFGVLLGFAALKFKVEGNPIVDELEAILPQTQCGQCGYPGCRPYAEAIANGDKVNKCPPGGTATMEKLASLMGVEPEPLNAEAQSQVKKVAYIREDECIGCTKCIQACPVDAIIGAGKLMHTVLTADCTGCDLCVEPCPVDCIDMIPVGQNLKNWNWRLNAIPVTLIQETPHEEKRG.

The hydrophobic stretch occupies residues 1 to 26 (MSTMLIAVILLTLLALFFGVLLGFAA). In terms of domain architecture, 4Fe-4S spans 32–90 (EGNPIVDELEAILPQTQCGQCGYPGCRPYAEAIANGDKVNKCPPGGTATMEKLASLMGV). The [4Fe-4S] cluster site is built by Cys-49, Cys-52, Cys-57, Cys-73, Cys-114, Cys-117, Cys-120, Cys-124, Cys-144, Cys-147, Cys-150, and Cys-154. 4Fe-4S ferredoxin-type domains follow at residues 105–134 (KVAY…GAGK) and 136–164 (MHTV…MIPV).

It belongs to the 4Fe4S bacterial-type ferredoxin family. RnfB subfamily. In terms of assembly, the complex is composed of six subunits: RnfA, RnfB, RnfC, RnfD, RnfE and RnfG. The cofactor is [4Fe-4S] cluster.

Its subcellular location is the cell inner membrane. Its function is as follows. Part of a membrane-bound complex that couples electron transfer with translocation of ions across the membrane. This Shewanella sp. (strain MR-7) protein is Ion-translocating oxidoreductase complex subunit B.